The following is a 295-amino-acid chain: Golgi-associated RAB2 interactor protein 1A (295 aa).

Residues 187-206 (MPNSSTETTPESSRPASSQS) form a disordered region. Low complexity predominate over residues 190–206 (SSTETTPESSRPASSQS). A phosphoserine mark is found at S220, S221, S251, and S255.

Belongs to the GARIN family. In terms of assembly, interacts (via N-terminus) with RAB2B (in GTP-bound form).

The protein localises to the golgi apparatus. RAB2B effector protein required for accurate acrosome formation and normal male fertility. The protein is Golgi-associated RAB2 interactor protein 1A (Garin1a) of Rattus norvegicus (Rat).